We begin with the raw amino-acid sequence, 127 residues long: Fluoride-specific ion channel FluC (127 aa).

Helical transmembrane passes span 6–26 (LAISLGASAGAVSRWLLGLGF), 37–57 (TLLANLLGGYLIGIAVTFFAA), 67–87 (LLVITGFLGGLTTFSTFSAEV), and 96–116 (LLWAGGAIAVHVIGSLVMTLL). Residues glycine 75 and threonine 78 each coordinate Na(+).

This sequence belongs to the fluoride channel Fluc/FEX (TC 1.A.43) family.

It is found in the cell inner membrane. It carries out the reaction fluoride(in) = fluoride(out). Its activity is regulated as follows. Na(+) is not transported, but it plays an essential structural role and its presence is essential for fluoride channel function. Functionally, fluoride-specific ion channel. Important for reducing fluoride concentration in the cell, thus reducing its toxicity. The sequence is that of Fluoride-specific ion channel FluC from Tolumonas auensis (strain DSM 9187 / NBRC 110442 / TA 4).